Consider the following 845-residue polypeptide: Putative DEAD-box ATP-dependent RNA helicase 29 (845 aa).

The Q motif signature appears at 28–56 (GGFESLNLGPNVFNAIKKKGYKVPTPIQR). One can recognise a Helicase ATP-binding domain in the interval 59-232 (MPLILSGVDV…KAGLREPQLV (174 aa)). Residue 72–79 (ARTGSGKT) coordinates ATP. The short motif at 180 to 183 (DEAD) is the DEAD box element. The Helicase C-terminal domain maps to 256-411 (KYSALLYLVR…EVLKNMEEVM (156 aa)). The disordered stretch occupies residues 675–845 (SGKIKTESGA…GGGGKRGRGR (171 aa)). Composition is skewed to basic and acidic residues over residues 696–716 (RWQE…DETT) and 738–754 (VRSE…ERQQ). Positions 770–799 (GGRGGARGGRGGGARGGRGGSRDFGGGGRD) are enriched in gly residues. Residues 806–817 (RGGRSGGRDFGG) show a composition bias toward basic and acidic residues. Basic residues predominate over residues 828 to 845 (GGKRGGGRGGGGKRGRGR).

It belongs to the DEAD box helicase family. DDX54/DBP10 subfamily.

It carries out the reaction ATP + H2O = ADP + phosphate + H(+). This chain is Putative DEAD-box ATP-dependent RNA helicase 29 (RH29), found in Arabidopsis thaliana (Mouse-ear cress).